A 752-amino-acid polypeptide reads, in one-letter code: DNA ligase (752 aa).

The segment at 1-25 (MKRNGFVPSNSVGRRGIPSNSTSSA) is disordered. NAD(+) is bound by residues 91–95 (DADFD), 140–141 (SL), and E170. The active-site N6-AMP-lysine intermediate is the K172. The NAD(+) site is built by R193, E233, K350, and K374. Residues C474, C477, C493, and C499 each coordinate Zn(2+). The BRCT domain occupies 669–752 (STPRTLAGLT…TLLDGGPAAL (84 aa)).

It belongs to the NAD-dependent DNA ligase family. LigA subfamily. Mg(2+) serves as cofactor. Requires Mn(2+) as cofactor.

It carries out the reaction NAD(+) + (deoxyribonucleotide)n-3'-hydroxyl + 5'-phospho-(deoxyribonucleotide)m = (deoxyribonucleotide)n+m + AMP + beta-nicotinamide D-nucleotide.. DNA ligase that catalyzes the formation of phosphodiester linkages between 5'-phosphoryl and 3'-hydroxyl groups in double-stranded DNA using NAD as a coenzyme and as the energy source for the reaction. It is essential for DNA replication and repair of damaged DNA. The polypeptide is DNA ligase (Nocardioides sp. (strain ATCC BAA-499 / JS614)).